Reading from the N-terminus, the 859-residue chain is DNA mismatch repair protein MutS (859 aa).

617-624 contacts ATP; the sequence is GPNMGGKS. The disordered stretch occupies residues 801–820; it reads TSLPHEVAPQAPGKPSVPQQ.

It belongs to the DNA mismatch repair MutS family.

Functionally, this protein is involved in the repair of mismatches in DNA. It is possible that it carries out the mismatch recognition step. This protein has a weak ATPase activity. The chain is DNA mismatch repair protein MutS from Pseudomonas fluorescens (strain ATCC BAA-477 / NRRL B-23932 / Pf-5).